The chain runs to 318 residues: Elongator complex protein 5 (318 aa).

Ser270 carries the post-translational modification Phosphoserine.

The protein belongs to the ELP5 family. Component of the elongator complex which consists of ELP1, ELP2, ELP3, ELP4, ELP5 and ELP6; in the complex, is required for optimal binding of ELP3 to ELP4. Post-translationally, tyrosine-phosphorylated.

It localises to the nucleus. It is found in the cytoplasm. The protein operates within tRNA modification; 5-methoxycarbonylmethyl-2-thiouridine-tRNA biosynthesis. Component of the elongator complex which is required for multiple tRNA modifications, including mcm5U (5-methoxycarbonylmethyl uridine), mcm5s2U (5-methoxycarbonylmethyl-2-thiouridine), and ncm5U (5-carbamoylmethyl uridine). The elongator complex catalyzes the formation of carboxymethyluridine in the wobble base at position 34 in tRNAs. Involved in cell migration. The polypeptide is Elongator complex protein 5 (Elp5) (Rattus norvegicus (Rat)).